We begin with the raw amino-acid sequence, 388 residues long: 3-dehydroquinate synthase (388 aa).

Belongs to the archaeal-type DHQ synthase family.

The enzyme catalyses 2-amino-2,3,7-trideoxy-D-lyxo-hept-6-ulosonate + NAD(+) + H2O = 3-dehydroquinate + NH4(+) + NADH + H(+). Functionally, catalyzes the oxidative deamination and cyclization of 2-amino-3,7-dideoxy-D-threo-hept-6-ulosonic acid (ADH) to yield 3-dehydroquinate (DHQ), which is fed into the canonical shikimic pathway of aromatic amino acid biosynthesis. The polypeptide is 3-dehydroquinate synthase (Natronomonas pharaonis (strain ATCC 35678 / DSM 2160 / CIP 103997 / JCM 8858 / NBRC 14720 / NCIMB 2260 / Gabara) (Halobacterium pharaonis)).